A 194-amino-acid chain; its full sequence is Orotate phosphoribosyltransferase (194 aa).

117–125 (EDIVSTGLS) provides a ligand contact to 5-phospho-alpha-D-ribose 1-diphosphate. Ser121 and Arg149 together coordinate orotate.

Belongs to the purine/pyrimidine phosphoribosyltransferase family. PyrE subfamily. Homodimer. The cofactor is Mg(2+).

The enzyme catalyses orotidine 5'-phosphate + diphosphate = orotate + 5-phospho-alpha-D-ribose 1-diphosphate. It functions in the pathway pyrimidine metabolism; UMP biosynthesis via de novo pathway; UMP from orotate: step 1/2. Catalyzes the transfer of a ribosyl phosphate group from 5-phosphoribose 1-diphosphate to orotate, leading to the formation of orotidine monophosphate (OMP). The polypeptide is Orotate phosphoribosyltransferase (Maricaulis maris (strain MCS10) (Caulobacter maris)).